The chain runs to 253 residues: tRNA (guanine-N(1)-)-methyltransferase (253 aa).

S-adenosyl-L-methionine-binding positions include Gly113 and 133–138 (IGDYVL).

Belongs to the RNA methyltransferase TrmD family. In terms of assembly, homodimer.

It localises to the cytoplasm. The enzyme catalyses guanosine(37) in tRNA + S-adenosyl-L-methionine = N(1)-methylguanosine(37) in tRNA + S-adenosyl-L-homocysteine + H(+). Functionally, specifically methylates guanosine-37 in various tRNAs. The polypeptide is tRNA (guanine-N(1)-)-methyltransferase (Chloroflexus aurantiacus (strain ATCC 29366 / DSM 635 / J-10-fl)).